The chain runs to 224 residues: Thiamine-phosphate synthase (224 aa).

4-amino-2-methyl-5-(diphosphooxymethyl)pyrimidine contacts are provided by residues 44 to 48 (QFREK) and Asn79. Mg(2+) contacts are provided by Asp80 and Asp99. Residue Ser117 participates in 4-amino-2-methyl-5-(diphosphooxymethyl)pyrimidine binding. 2-[(2R,5Z)-2-carboxy-4-methylthiazol-5(2H)-ylidene]ethyl phosphate is bound at residue 143–145 (TET). Lys146 is a binding site for 4-amino-2-methyl-5-(diphosphooxymethyl)pyrimidine. Residues Gly175 and 195 to 196 (IS) each bind 2-[(2R,5Z)-2-carboxy-4-methylthiazol-5(2H)-ylidene]ethyl phosphate.

The protein belongs to the thiamine-phosphate synthase family. It depends on Mg(2+) as a cofactor.

The enzyme catalyses 2-[(2R,5Z)-2-carboxy-4-methylthiazol-5(2H)-ylidene]ethyl phosphate + 4-amino-2-methyl-5-(diphosphooxymethyl)pyrimidine + 2 H(+) = thiamine phosphate + CO2 + diphosphate. It catalyses the reaction 2-(2-carboxy-4-methylthiazol-5-yl)ethyl phosphate + 4-amino-2-methyl-5-(diphosphooxymethyl)pyrimidine + 2 H(+) = thiamine phosphate + CO2 + diphosphate. The catalysed reaction is 4-methyl-5-(2-phosphooxyethyl)-thiazole + 4-amino-2-methyl-5-(diphosphooxymethyl)pyrimidine + H(+) = thiamine phosphate + diphosphate. It participates in cofactor biosynthesis; thiamine diphosphate biosynthesis; thiamine phosphate from 4-amino-2-methyl-5-diphosphomethylpyrimidine and 4-methyl-5-(2-phosphoethyl)-thiazole: step 1/1. In terms of biological role, condenses 4-methyl-5-(beta-hydroxyethyl)thiazole monophosphate (THZ-P) and 2-methyl-4-amino-5-hydroxymethyl pyrimidine pyrophosphate (HMP-PP) to form thiamine monophosphate (TMP). This Bacillus licheniformis (strain ATCC 14580 / DSM 13 / JCM 2505 / CCUG 7422 / NBRC 12200 / NCIMB 9375 / NCTC 10341 / NRRL NRS-1264 / Gibson 46) protein is Thiamine-phosphate synthase.